The primary structure comprises 1038 residues: Importin-7 (1038 aa).

M1 carries the post-translational modification N-acetylmethionine. The Importin N-terminal domain maps to A22 to H101. The disordered stretch occupies residues E881–E910. Residues N884–E910 show a composition bias toward acidic residues. S886 carries the phosphoserine modification. T898 carries the phosphothreonine modification. 2 positions are modified to phosphoserine: S903 and S1020.

This sequence belongs to the importin beta family. Forms a heterodimer with KPNB1. Interacts with histone H1. Interacts with H2A, H2B, H3 and H4 histones. Interacts with SNUPN and XPO1. Interacts with RPS7 and RPL5. Interacts with RPL23A (via BIB domain). Binds directly to nuclear pore complexes. Interacts with SMAD4 and NUP93; translocates SMAD4 to the nucleus through the NPC upon BMP7 stimulation resulting in activation of SMAD4 signaling. Interacts with phosphorylated SMAD2; the interaction facilitates translocation of SMAD2 to the nucleus. Interacts with SRP19. Interacts with RUNX2; the interaction inhibits RUNX2 nuclear translocation in osteoblasts. Interacts with HDAC6, DLX3 and KLF4; the interaction facilitates HDAC6, DLX3 and KLF4 nuclear translocation in dental papilla cells.

The protein localises to the cytoplasm. It is found in the nucleus. Functionally, functions in nuclear protein import, either by acting as autonomous nuclear transport receptor or as an adapter-like protein in association with the importin-beta subunit KPNB1. Acting autonomously is thought to serve itself as receptor for nuclear localization signals (NLS) and to promote translocation of import substrates through the nuclear pore complex (NPC) by an energy requiring, Ran-dependent mechanism. At the nucleoplasmic side of the NPC, Ran binds to importin, the importin/substrate complex dissociates and importin is re-exported from the nucleus to the cytoplasm where GTP hydrolysis releases Ran. Mediates autonomously the nuclear import of ribosomal proteins RPL23A, RPS7 and RPL5. In association with KPNB1 mediates the nuclear import of H1 histone and the Ran-binding site of IPO7 is not required but synergizes with that of KPNB1 in importin/substrate complex dissociation. Promotes odontoblast differentiation via promoting nuclear translocation of DLX3, KLF4, SMAD2, thereby facilitating the transcription of target genes that play a role in odontoblast differentiation. Facilitates BMP4-induced translocation of SMAD1 to the nucleus and recruitment to the MSX1 gene promoter, thereby promotes the expression of the odontogenic regulator MSX1 in dental mesenchymal cells. Also promotes odontoblast differentiation by facilitating the nuclear translocation of HDAC6 and subsequent repression of RUNX2 expression. Inhibits osteoblast differentiation by inhibiting nuclear translocation of RUNX2 and therefore inhibition of RUNX2 target gene transcription. In vitro, mediates nuclear import of H2A, H2B, H3 and H4 histones. The sequence is that of Importin-7 (Ipo7) from Mus musculus (Mouse).